The sequence spans 92 residues: uncharacterized protein (92 aa).

2 consecutive transmembrane segments (helical) span residues 34 to 54 and 65 to 85; these read GLGIAVIIFCVCIIAFMFMFG and LLYIVVGGVLLWGAGTFASTV.

It localises to the cell membrane. This is an uncharacterized protein from Bacillus anthracis.